We begin with the raw amino-acid sequence, 70 residues long: Ranatuerin-2SN1 (70 aa).

The first 22 residues, 1-22, serve as a signal peptide directing secretion; it reads MFTLKKSLLLIFFLGTISLSLC. Residues 23-40 constitute a propeptide, removed in mature form; the sequence is EKERDADDDEVEVIKQEE. An intrachain disulfide couples cysteine 65 to cysteine 70.

This sequence belongs to the frog skin active peptide (FSAP) family. Ranatuerin subfamily. As to expression, expressed by the skin glands.

The protein localises to the secreted. In terms of biological role, antimicrobial peptide. Weakly active against P.faecalis X29. Not active against fungi. Shows very weak hemolytic activity against human erythrocytes. The polypeptide is Ranatuerin-2SN1 (Sylvirana spinulosa (Fine-spined frog)).